Reading from the N-terminus, the 473-residue chain is Photosystem II CP43 reaction center protein (473 aa).

A propeptide spanning residues 1–14 is cleaved from the precursor; sequence MKILYSQRRFYPVE. An N-acetylthreonine modification is found at T15. T15 is subject to Phosphothreonine. The next 5 membrane-spanning stretches (helical) occupy residues 69–93, 134–155, 178–200, 255–275, and 291–312; these read LFEV…PHLA, LIGP…KDKN, KALY…RKIT, KPFA…LSYS, and WFNN…ASQA. Position 367 (E367) interacts with [CaMn4O5] cluster. A helical membrane pass occupies residues 447–471; sequence RARAAAAGFEKGIDRDFEPVLSMTP.

Belongs to the PsbB/PsbC family. PsbC subfamily. In terms of assembly, PSII is composed of 1 copy each of membrane proteins PsbA, PsbB, PsbC, PsbD, PsbE, PsbF, PsbH, PsbI, PsbJ, PsbK, PsbL, PsbM, PsbT, PsbX, PsbY, PsbZ, Psb30/Ycf12, at least 3 peripheral proteins of the oxygen-evolving complex and a large number of cofactors. It forms dimeric complexes. Binds multiple chlorophylls and provides some of the ligands for the Ca-4Mn-5O cluster of the oxygen-evolving complex. It may also provide a ligand for a Cl- that is required for oxygen evolution. PSII binds additional chlorophylls, carotenoids and specific lipids. is required as a cofactor. Phosphorylated on threonine residue(s).

Its subcellular location is the plastid. The protein localises to the chloroplast thylakoid membrane. Functionally, one of the components of the core complex of photosystem II (PSII). It binds chlorophyll and helps catalyze the primary light-induced photochemical processes of PSII. PSII is a light-driven water:plastoquinone oxidoreductase, using light energy to abstract electrons from H(2)O, generating O(2) and a proton gradient subsequently used for ATP formation. The sequence is that of Photosystem II CP43 reaction center protein from Marchantia polymorpha (Common liverwort).